The primary structure comprises 191 residues: Prostaglandin-H2 D-isomerase (191 aa).

The signal sequence occupies residues 1–24; it reads MGALCTLWLGLVLLGVLGALQTSA. A Pyrrolidone carboxylic acid modification is found at glutamine 25. Asparagine 51 is a glycosylation site (N-linked (GlcNAc...) asparagine). Residue cysteine 65 is the Nucleophile of the active site. Residue asparagine 78 is glycosylated (N-linked (GlcNAc...) asparagine). The cysteines at positions 89 and 186 are disulfide-linked.

The protein belongs to the calycin superfamily. Lipocalin family. In terms of assembly, monomer. Post-translationally, N- and O-glycosylated. Both N-glycosylation recognition sites are almost quantitatively occupied by N-glycans of the biantennary complex type, with a considerable proportion of structures bearing a bisecting GlcNAc. N-glycan at Asn-78: dHex1Hex5HexNAc4. Agalacto structure as well as sialylated and nonsialylated oligosaccharides bearing alpha2-3- and/or alpha2-6-linked NeuNAc are present.

It is found in the rough endoplasmic reticulum. Its subcellular location is the nucleus membrane. It localises to the golgi apparatus. The protein resides in the cytoplasm. The protein localises to the perinuclear region. It is found in the secreted. The catalysed reaction is prostaglandin H2 = prostaglandin D2. Catalyzes the conversion of PGH2 to PGD2, a prostaglandin involved in smooth muscle contraction/relaxation and a potent inhibitor of platelet aggregation. Involved in a variety of CNS functions, such as sedation, NREM sleep and PGE2-induced allodynia, and may have an anti-apoptotic role in oligodendrocytes. Binds small non-substrate lipophilic molecules, including biliverdin, bilirubin, retinal, retinoic acid and thyroid hormone, and may act as a scavenger for harmful hydrophobic molecules and as a secretory retinoid and thyroid hormone transporter. Possibly involved in development and maintenance of the blood-brain, blood-retina, blood-aqueous humor and blood-testis barrier. It is likely to play important roles in both maturation and maintenance of the central nervous system and male reproductive system. Involved in PLA2G3-dependent maturation of mast cells. PLA2G3 is secreted by immature mast cells and acts on nearby fibroblasts upstream to PTDGS to synthesize PGD2, which in turn promotes mast cell maturation and degranulation via PTGDR. The chain is Prostaglandin-H2 D-isomerase (PTGDS) from Canis lupus familiaris (Dog).